A 118-amino-acid polypeptide reads, in one-letter code: NADPH-dependent 7-cyano-7-deazaguanine reductase (118 aa).

Cys-31 functions as the Thioimide intermediate in the catalytic mechanism. Asp-38 functions as the Proton donor in the catalytic mechanism. Residues 53–55 (VEL) and 72–73 (YE) each bind substrate.

Belongs to the GTP cyclohydrolase I family. QueF type 1 subfamily.

Its subcellular location is the cytoplasm. It carries out the reaction 7-aminomethyl-7-carbaguanine + 2 NADP(+) = 7-cyano-7-deazaguanine + 2 NADPH + 3 H(+). It functions in the pathway tRNA modification; tRNA-queuosine biosynthesis. In terms of biological role, catalyzes the NADPH-dependent reduction of 7-cyano-7-deazaguanine (preQ0) to 7-aminomethyl-7-deazaguanine (preQ1). In Chlorobium phaeobacteroides (strain BS1), this protein is NADPH-dependent 7-cyano-7-deazaguanine reductase.